Reading from the N-terminus, the 362-residue chain is Chorismate synthase (362 aa).

Position 47 (Arg47) interacts with NADP(+). Residues 124 to 126, Gly286, 301 to 305, and Arg327 each bind FMN; these read RSS and KPTAT.

The protein belongs to the chorismate synthase family. As to quaternary structure, homotetramer. FMNH2 serves as cofactor.

It catalyses the reaction 5-O-(1-carboxyvinyl)-3-phosphoshikimate = chorismate + phosphate. The protein operates within metabolic intermediate biosynthesis; chorismate biosynthesis; chorismate from D-erythrose 4-phosphate and phosphoenolpyruvate: step 7/7. Its function is as follows. Catalyzes the anti-1,4-elimination of the C-3 phosphate and the C-6 proR hydrogen from 5-enolpyruvylshikimate-3-phosphate (EPSP) to yield chorismate, which is the branch point compound that serves as the starting substrate for the three terminal pathways of aromatic amino acid biosynthesis. This reaction introduces a second double bond into the aromatic ring system. The chain is Chorismate synthase from Synechocystis sp. (strain ATCC 27184 / PCC 6803 / Kazusa).